Here is a 448-residue protein sequence, read N- to C-terminus: Cytoplasmic tRNA 2-thiolation protein 2 (448 aa).

Belongs to the CTU2/NCS2 family.

It localises to the cytoplasm. It participates in tRNA modification; 5-methoxycarbonylmethyl-2-thiouridine-tRNA biosynthesis. Its function is as follows. Plays a central role in 2-thiolation of mcm(5)S(2)U at tRNA wobble positions of tRNA(Lys), tRNA(Glu) and tRNA(Gln). May act by forming a heterodimer with NCS6 that ligates sulfur from thiocarboxylated URM1 onto the uridine of tRNAs at wobble position. Prior mcm(5) tRNA modification by the elongator complex is required for 2-thiolation. May also be involved in protein urmylation. The polypeptide is Cytoplasmic tRNA 2-thiolation protein 2 (Debaryomyces hansenii (strain ATCC 36239 / CBS 767 / BCRC 21394 / JCM 1990 / NBRC 0083 / IGC 2968) (Yeast)).